We begin with the raw amino-acid sequence, 214 residues long: Soluble inorganic pyrophosphatase (214 aa).

Residues 1-20 (MSEEDKTAASAEQPKRAPKL) are disordered. Positions 64, 78, and 90 each coordinate substrate. Mg(2+)-binding residues include Asp-100, Asp-105, and Asp-137. Tyr-174 contacts substrate.

This sequence belongs to the PPase family. The cofactor is Mg(2+).

The protein localises to the cytoplasm. It catalyses the reaction diphosphate + H2O = 2 phosphate + H(+). The sequence is that of Soluble inorganic pyrophosphatase (IPP) from Zea mays (Maize).